The sequence spans 131 residues: D-ribose pyranase (131 aa).

The active-site Proton donor is His20. Residues Asp28, His98, and 120–122 (FSN) each bind substrate.

The protein belongs to the RbsD / FucU family. RbsD subfamily. As to quaternary structure, homodecamer.

It is found in the cytoplasm. The catalysed reaction is beta-D-ribopyranose = beta-D-ribofuranose. It participates in carbohydrate metabolism; D-ribose degradation; D-ribose 5-phosphate from beta-D-ribopyranose: step 1/2. Catalyzes the interconversion of beta-pyran and beta-furan forms of D-ribose. This Oenococcus oeni (strain ATCC BAA-331 / PSU-1) protein is D-ribose pyranase.